Reading from the N-terminus, the 185-residue chain is Ribonuclease HII (185 aa).

One can recognise an RNase H type-2 domain in the interval 1-185 (MIILGIDEAG…KSYKPIQLLL (185 aa)). A divalent metal cation contacts are provided by D7, E8, and D99.

Belongs to the RNase HII family. The cofactor is Mn(2+). Mg(2+) is required as a cofactor.

The protein localises to the cytoplasm. The catalysed reaction is Endonucleolytic cleavage to 5'-phosphomonoester.. Its function is as follows. Endonuclease that specifically degrades the RNA of RNA-DNA hybrids. The sequence is that of Ribonuclease HII from Francisella tularensis subsp. novicida (strain U112).